Here is a 300-residue protein sequence, read N- to C-terminus: Acetylglutamate kinase (300 aa).

Residues 73–74 (GG), arginine 95, and asparagine 197 contribute to the substrate site.

It belongs to the acetylglutamate kinase family. ArgB subfamily.

It localises to the cytoplasm. It carries out the reaction N-acetyl-L-glutamate + ATP = N-acetyl-L-glutamyl 5-phosphate + ADP. Its pathway is amino-acid biosynthesis; L-arginine biosynthesis; N(2)-acetyl-L-ornithine from L-glutamate: step 2/4. Catalyzes the ATP-dependent phosphorylation of N-acetyl-L-glutamate. This is Acetylglutamate kinase from Bordetella parapertussis (strain 12822 / ATCC BAA-587 / NCTC 13253).